A 470-amino-acid polypeptide reads, in one-letter code: Cysteine--tRNA ligase (470 aa).

Residue Cys29 participates in Zn(2+) binding. The short motif at 31–41 (PTVYNYAHIGN) is the 'HIGH' region element. Residues Cys211, His236, and Glu240 each coordinate Zn(2+). Residues 273-277 (KMSKS) carry the 'KMSKS' region motif. Lys276 is a binding site for ATP.

This sequence belongs to the class-I aminoacyl-tRNA synthetase family. Monomer. Zn(2+) serves as cofactor.

It localises to the cytoplasm. It catalyses the reaction tRNA(Cys) + L-cysteine + ATP = L-cysteinyl-tRNA(Cys) + AMP + diphosphate. This Phenylobacterium zucineum (strain HLK1) protein is Cysteine--tRNA ligase.